We begin with the raw amino-acid sequence, 421 residues long: FAD-dependent monooxygenase atnJ (421 aa).

Residues 9–29 traverse the membrane as a helical segment; it reads LVPLHVVIVGAGIGGLSAAVA. Positions 41 and 54 each coordinate FAD. Residue Arg-188 is part of the active site. FAD-binding residues include Asp-303 and Val-316. The tract at residues 371–392 is disordered; sequence RDGDAQAARDSQRKATSGTGQN.

It belongs to the paxM FAD-dependent monooxygenase family. FAD is required as a cofactor.

The protein localises to the membrane. It participates in secondary metabolite biosynthesis; terpenoid biosynthesis. Functionally, FAD-dependent monooxygenase; part of the gene cluster that mediates the biosynthesis of the meroterpenoids arthripenoids. The pathway begins with the HR-PKS atnH that catalyzes two chain-extension steps to form a reduced triketide, which then primes the SAT domain in the NR-PKS atnG to initiate three more cycles of extension to give a linear hexaketide corresponding to the polyketide part of arthripenoids. The FAD-dependent monooxygenase atnJ then performs an oxidative decarboxylation at C11 of the atnH/atnG product, via an electrophilic aromatic hydroxylation with concomitant ipso-decarboxylation. The membrane-bound polyprenyl transferase atnF then introduces a farnesyl group before the FAD-dependent monooxygenase atnK functions as the first epoxidase on terminal C12'-C13' olefin, followed by a second epoxidation on C7'-C8' catalyzed by atnA. The terpene cyclase/mutase atnI then initiates the sequential tricyclic ring formation through protonation of the terminal epoxide and catalyzes the regioselective and stereoselective 6/6/6-tricyclic ring formation. The cytochrome P450 monooxygenase atnM is responsible for hydroxylating both C1' and C10'. The next steps may involve ketoreduction and acetyl transfer by the ketoreductase atnB and the acetyltransferase atnC, and lead to the production of arthripenoid B, the final biosynthetic product of the atn cluster. The hydroquinone moiety in arthripenoid B is prone to undergo spontaneous oxidation to afford a benzoquinone compound, a key intermediate for generating structure diversity. For instance, addition of a cysteine followed by ring contraction gives arthripenoid A, tautomerization gives the main product arthripenoid C, addition of a molecular of water or amine affords arthripenoid D or E, respectively, and loss of one water forms arthripenoid F. This is FAD-dependent monooxygenase atnJ from Arthrinium sp.